The following is a 178-amino-acid chain: Acireductone dioxygenase (178 aa).

Residues 1–22 (MKAYWYDNKPGDQREPHDSGRP) form a disordered region. Positions 9–22 (KPGDQREPHDSGRP) are enriched in basic and acidic residues. The Fe(2+) site is built by His-81, His-83, Glu-87, and His-126. Positions 81, 83, 87, and 126 each coordinate Ni(2+).

It belongs to the acireductone dioxygenase (ARD) family. Fe(2+) is required as a cofactor. Ni(2+) serves as cofactor.

The protein localises to the cytoplasm. It localises to the nucleus. It carries out the reaction 1,2-dihydroxy-5-(methylsulfanyl)pent-1-en-3-one + O2 = 4-methylsulfanyl-2-oxobutanoate + formate + 2 H(+). The catalysed reaction is 1,2-dihydroxy-5-(methylsulfanyl)pent-1-en-3-one + O2 = 3-(methylsulfanyl)propanoate + CO + formate + 2 H(+). It participates in amino-acid biosynthesis; L-methionine biosynthesis via salvage pathway; L-methionine from S-methyl-5-thio-alpha-D-ribose 1-phosphate: step 5/6. Functionally, catalyzes 2 different reactions between oxygen and the acireductone 1,2-dihydroxy-3-keto-5-methylthiopentene (DHK-MTPene) depending upon the metal bound in the active site. Fe-containing acireductone dioxygenase (Fe-ARD) produces formate and 2-keto-4-methylthiobutyrate (KMTB), the alpha-ketoacid precursor of methionine in the methionine recycle pathway. Ni-containing acireductone dioxygenase (Ni-ARD) produces methylthiopropionate, carbon monoxide and formate, and does not lie on the methionine recycle pathway. The protein is Acireductone dioxygenase (adi1) of Emericella nidulans (strain FGSC A4 / ATCC 38163 / CBS 112.46 / NRRL 194 / M139) (Aspergillus nidulans).